A 565-amino-acid chain; its full sequence is Sulfite reductase [NADPH] hemoprotein beta-component (565 aa).

4 residues coordinate [4Fe-4S] cluster: cysteine 429, cysteine 435, cysteine 474, and cysteine 478. Position 478 (cysteine 478) interacts with siroheme.

It belongs to the nitrite and sulfite reductase 4Fe-4S domain family. As to quaternary structure, alpha(8)-beta(8). The alpha component is a flavoprotein, the beta component is a hemoprotein. Siroheme serves as cofactor. The cofactor is [4Fe-4S] cluster.

The catalysed reaction is hydrogen sulfide + 3 NADP(+) + 3 H2O = sulfite + 3 NADPH + 4 H(+). It functions in the pathway sulfur metabolism; hydrogen sulfide biosynthesis; hydrogen sulfide from sulfite (NADPH route): step 1/1. Functionally, component of the sulfite reductase complex that catalyzes the 6-electron reduction of sulfite to sulfide. This is one of several activities required for the biosynthesis of L-cysteine from sulfate. This Shewanella halifaxensis (strain HAW-EB4) protein is Sulfite reductase [NADPH] hemoprotein beta-component.